Reading from the N-terminus, the 148-residue chain is Deoxyuridine 5'-triphosphate nucleotidohydrolase (148 aa).

The protein belongs to the dUTPase family. Mg(2+) is required as a cofactor.

It catalyses the reaction dUTP + H2O = dUMP + diphosphate + H(+). Its pathway is pyrimidine metabolism; dUMP biosynthesis; dUMP from dCTP (dUTP route): step 2/2. Its function is as follows. This enzyme decreases the intracellular concentration of dUTP so that uracil cannot be incorporated into viral progeny DNA. This activity is sufficient to exclude uracil from the DNA during phage replication. In the case of dUTPase mutant phages, the host dUTPase activity is not sufficient to exclude uracil from T5 DNA and uracil are incorporated, leading to decreased phage viability. This chain is Deoxyuridine 5'-triphosphate nucleotidohydrolase (DUT), found in Escherichia coli (Enterobacteria phage T5).